The following is a 464-amino-acid chain: Rab GDP-dissociation inhibitor (464 aa).

It belongs to the Rab GDI family. As to quaternary structure, interacts with the GDP-bound form of Rab GTPase YPT7.

In terms of biological role, regulates the GDP/GTP exchange reaction of YPT7 by inhibiting the dissociation of GDP from it, and the subsequent binding of GTP to YTP7. The chain is Rab GDP-dissociation inhibitor (GDI1) from Pyricularia oryzae (strain 70-15 / ATCC MYA-4617 / FGSC 8958) (Rice blast fungus).